Consider the following 181-residue polypeptide: Bifunctional protein PyrR (181 aa).

Positions 101–113 match the PRPP-binding motif; that stretch reads VIVVDDVLYTGRT.

Belongs to the purine/pyrimidine phosphoribosyltransferase family. PyrR subfamily. In terms of assembly, homodimer and homohexamer; in equilibrium.

It catalyses the reaction UMP + diphosphate = 5-phospho-alpha-D-ribose 1-diphosphate + uracil. Functionally, regulates transcriptional attenuation of the pyrimidine nucleotide (pyr) operon by binding in a uridine-dependent manner to specific sites on pyr mRNA. This disrupts an antiterminator hairpin in the RNA and favors formation of a downstream transcription terminator, leading to a reduced expression of downstream genes. In terms of biological role, also displays a weak uracil phosphoribosyltransferase activity which is not physiologically significant. In Bacillus velezensis (strain DSM 23117 / BGSC 10A6 / LMG 26770 / FZB42) (Bacillus amyloliquefaciens subsp. plantarum), this protein is Bifunctional protein PyrR.